A 138-amino-acid polypeptide reads, in one-letter code: Small ribosomal subunit protein uS11 (138 aa).

Residues 1–12 show a composition bias toward polar residues; the sequence is MAKQSAKGSTTT. Residues 1–37 are disordered; it reads MAKQSAKGSTTTKRQRGKRREKKNVPRGQAHIQSTFN. Residues 13–22 show a composition bias toward basic residues; the sequence is KRQRGKRREK.

The protein belongs to the universal ribosomal protein uS11 family. Part of the 30S ribosomal subunit. Interacts with proteins S7 and S18. Binds to IF-3.

Functionally, located on the platform of the 30S subunit, it bridges several disparate RNA helices of the 16S rRNA. Forms part of the Shine-Dalgarno cleft in the 70S ribosome. This chain is Small ribosomal subunit protein uS11, found in Roseiflexus castenholzii (strain DSM 13941 / HLO8).